Here is a 490-residue protein sequence, read N- to C-terminus: Betaine aldehyde dehydrogenase (490 aa).

Position 93 (asparagine 93) interacts with K(+). 150-152 is an NAD(+) binding site; sequence GAW. Residue lysine 162 is the Charge relay system of the active site. 176–179 lines the NAD(+) pocket; sequence KPSE. Valine 180 is a K(+) binding site. 230-233 contributes to the NAD(+) binding site; that stretch reads GTAT. Residue leucine 246 coordinates K(+). Glutamate 252 (proton acceptor) is an active-site residue. Residues glycine 254, cysteine 286, and glutamate 387 each coordinate NAD(+). Cysteine 286 (nucleophile) is an active-site residue. Position 286 is a cysteine sulfenic acid (-SOH) (cysteine 286). Positions 457 and 460 each coordinate K(+). Residue glutamate 464 is the Charge relay system of the active site.

It belongs to the aldehyde dehydrogenase family. Dimer of dimers. K(+) serves as cofactor.

It catalyses the reaction betaine aldehyde + NAD(+) + H2O = glycine betaine + NADH + 2 H(+). It participates in amine and polyamine biosynthesis; betaine biosynthesis via choline pathway; betaine from betaine aldehyde: step 1/1. Functionally, involved in the biosynthesis of the osmoprotectant glycine betaine. Catalyzes the irreversible oxidation of betaine aldehyde to the corresponding acid. The polypeptide is Betaine aldehyde dehydrogenase (Xanthomonas euvesicatoria pv. vesicatoria (strain 85-10) (Xanthomonas campestris pv. vesicatoria)).